Reading from the N-terminus, the 126-residue chain is Thioredoxin H-type 1 (126 aa).

Residues 2-120 (AANDATSSEE…LQQTIVKHAA (119 aa)) enclose the Thioredoxin domain. Residues Cys46 and Cys49 each act as nucleophile in the active site. An intrachain disulfide couples Cys46 to Cys49.

Belongs to the thioredoxin family. Plant H-type subfamily.

It localises to the cytoplasm. Its function is as follows. Participates in various redox reactions through the reversible oxidation of the active center dithiol to a disulfide. The H form is known to activate a number of cytosolic enzymes. The chain is Thioredoxin H-type 1 from Nicotiana tabacum (Common tobacco).